The following is a 79-amino-acid chain: uncharacterized protein (79 aa).

Residues 51–79 form a disordered region; sequence PAQFPKVQRPPTLLGGKNTSTQTTLHPVI. The span at 67–79 shows a compositional bias: polar residues; sequence KNTSTQTTLHPVI.

This is an uncharacterized protein from Homo sapiens (Human).